The following is a 234-amino-acid chain: tRNA (guanine-N(1)-)-methyltransferase (234 aa).

S-adenosyl-L-methionine-binding positions include Gly112 and 132-137 (IGDFIL).

The protein belongs to the RNA methyltransferase TrmD family. Homodimer.

Its subcellular location is the cytoplasm. The enzyme catalyses guanosine(37) in tRNA + S-adenosyl-L-methionine = N(1)-methylguanosine(37) in tRNA + S-adenosyl-L-homocysteine + H(+). Specifically methylates guanosine-37 in various tRNAs. The polypeptide is tRNA (guanine-N(1)-)-methyltransferase (Campylobacter jejuni (strain RM1221)).